Reading from the N-terminus, the 272-residue chain is HMP-PP phosphatase (272 aa).

Residue Asp-8 is the Nucleophile of the active site. Mg(2+) contacts are provided by Asp-8, Asp-10, and Asp-212.

This sequence belongs to the HAD-like hydrolase superfamily. Cof family. It depends on Mg(2+) as a cofactor.

It catalyses the reaction 4-amino-2-methyl-5-(diphosphooxymethyl)pyrimidine + H2O = 4-amino-2-methyl-5-(phosphooxymethyl)pyrimidine + phosphate + H(+). Functionally, catalyzes the hydrolysis of 4-amino-2-methyl-5-hydroxymethylpyrimidine pyrophosphate (HMP-PP) to 4-amino-2-methyl-5-hydroxymethylpyrimidine phosphate (HMP-P). This Salmonella typhi protein is HMP-PP phosphatase.